The sequence spans 585 residues: A-type ATP synthase subunit A (585 aa).

Position 231–238 (G231–T238) interacts with ATP.

This sequence belongs to the ATPase alpha/beta chains family. Has multiple subunits with at least A(3), B(3), C, D, E, F, H, I and proteolipid K(x).

It localises to the cell membrane. It carries out the reaction ATP + H2O + 4 H(+)(in) = ADP + phosphate + 5 H(+)(out). Functionally, produces ATP from ADP in the presence of a proton gradient across the membrane. The archaeal alpha chain is a catalytic subunit. Its function is as follows. Component of the A-type ATP synthase that produces ATP from ADP in the presence of a proton gradient across the membrane. The A chain is the catalytic subunit. The polypeptide is A-type ATP synthase subunit A (Thermococcus sp. (strain KI)).